Here is a 248-residue protein sequence, read N- to C-terminus: Triosephosphate isomerase (248 aa).

14 to 16 contributes to the substrate binding site; that stretch reads NWK. His99 (electrophile) is an active-site residue. The active-site Proton acceptor is Glu170. Substrate is bound by residues Gly176, Ser212, and 233–234; that span reads GG.

The protein belongs to the triosephosphate isomerase family. As to quaternary structure, homodimer.

The protein localises to the cytoplasm. The catalysed reaction is D-glyceraldehyde 3-phosphate = dihydroxyacetone phosphate. It participates in carbohydrate biosynthesis; gluconeogenesis. The protein operates within carbohydrate degradation; glycolysis; D-glyceraldehyde 3-phosphate from glycerone phosphate: step 1/1. In terms of biological role, involved in the gluconeogenesis. Catalyzes stereospecifically the conversion of dihydroxyacetone phosphate (DHAP) to D-glyceraldehyde-3-phosphate (G3P). The sequence is that of Triosephosphate isomerase from Bordetella bronchiseptica (strain ATCC BAA-588 / NCTC 13252 / RB50) (Alcaligenes bronchisepticus).